The primary structure comprises 887 residues: Oxysterol-binding protein-related protein 3 (887 aa).

The disordered stretch occupies residues 1 to 35; sequence MMSDEKNLGVSQKLVSPSRSTSSCSSKQGSRQDSW. Serine 16 and serine 34 each carry phosphoserine. Low complexity predominate over residues 16–32; sequence SPSRSTSSCSSKQGSRQ. The region spanning 51 to 146 is the PH domain; sequence PPVQKGFLLK…WVSKLRHHRM (96 aa). Positions 161–167 match the FFAT 1 motif; sequence HFFSGST. Residues serine 200, serine 251, and serine 265 each carry the phosphoserine modification. Residues 261–326 are disordered; it reads GSFESPKKEK…KNYSDGSETS (66 aa). Residues 268–280 are compositionally biased toward basic residues; the sequence is KEKRSHRRWRSRA. Phosphoserine occurs at positions 304, 309, 320, 323, 371, 372, 410, 425, 437, and 440. The short motif at 450-454 is the FFAT 2 element; the sequence is EFFDA.

Belongs to the OSBP family. In terms of assembly, homodimer. Interacts with RRAS. Interacts (phosphorylated form) with VAPA. Interacts with OSBPL6. Phosphorylation is enhanced in vitro by phorbol-12-myristate-13-acetate (PMA), forskolin and calcium ionophore A23187. Phosphorylation seems to be stimulated in conditions of low cell-cell (or cell-matrix) adhesion. Expressed in a subset of small lymphocytes (at protein level). Expressed at high concentration in kidney, lymph node and thymus. Expressed at moderate concentration in stomach, jejunum, ileum, appendix, spleen, leukocytes, trachea, lung and thyroid gland. Expressed at low concentration in whole brain, esophagus, duodenum, ileocecum, colon, skeletal muscle, bone marrow, placenta and mammary gland. Isoform 1a, isoform 1b, isoform 1c and isoform 1d are highly expressed in brain, bone marrow, colon, kidney, lung, skeletal muscle, spleen, thymus and thyroid. Not expressed in heart and liver. Isoform 2a, isoform 2b, isoform 2c and isoform 2d are expressed in brain, bone marrow, kidney, skeletal muscle, spleen, thymus and thyroid. Not expressed in heart, liver and lung.

It localises to the endoplasmic reticulum membrane. Its subcellular location is the cytoplasm. It is found in the cytosol. The protein localises to the cell membrane. The protein resides in the cell projection. It localises to the filopodium tip. Its subcellular location is the nucleus membrane. Its function is as follows. Phosphoinositide-binding protein which associates with both cell and endoplasmic reticulum (ER) membranes. Can bind to the ER membrane protein VAPA and recruit VAPA to plasma membrane sites, thus linking these intracellular compartments. The ORP3-VAPA complex stimulates RRAS signaling which in turn attenuates integrin beta-1 (ITGB1) activation at the cell surface. With VAPA, may regulate ER morphology. Has a role in regulation of the actin cytoskeleton, cell polarity and cell adhesion. Binds to phosphoinositides with preference for PI(3,4)P2 and PI(3,4,5)P3. Also binds 25-hydroxycholesterol and cholesterol. This Homo sapiens (Human) protein is Oxysterol-binding protein-related protein 3 (OSBPL3).